Reading from the N-terminus, the 358-residue chain is Trace amine-associated receptor 7d (358 aa).

At 1–47 the chain is on the extracellular side; it reads MRVDDDRFPWDQDSILSRDLLSASSLQLCYENLNRSCVRSPYSPGPR. An N-linked (GlcNAc...) asparagine glycan is attached at Asn-34. Disulfide bonds link Cys-37-Cys-201 and Cys-120-Cys-205. A helical membrane pass occupies residues 48-68; that stretch reads LILYAVFGFGAVLAVCGNLMV. At 69–83 the chain is on the cytoplasmic side; the sequence is MTSILHFRQLHSPAN. A helical membrane pass occupies residues 84 to 104; that stretch reads FLVASLACADFLVGLTVMPFS. The Extracellular segment spans residues 105–122; the sequence is MVRSVEGCWYFGDTYCKL. A helical membrane pass occupies residues 123-143; the sequence is HTCFDVSFCYCSLFHLCFISV. The Cytoplasmic portion of the chain corresponds to 144 to 166; sequence DRYIAVSDPLIYPTRFTASVSGK. Residues 167-187 form a helical membrane-spanning segment; that stretch reads CITFSWLLSIIYGFPLIYTGA. Residues 188–212 are Extracellular-facing; it reads SEAGLEDLVSALTCVGGCQIPMNQK. A helical transmembrane segment spans residues 213-233; the sequence is FVLINFLLFLVPTLVMMTVYS. The Cytoplasmic portion of the chain corresponds to 234–274; sequence KIFLIARQQAQNIEKMRKQTARASESYKDRVCKRERKAAKT. Residues 275 to 295 traverse the membrane as a helical segment; that stretch reads LGIAVAAFLLSWLPYFIDSII. Residues 296-309 are Extracellular-facing; the sequence is DAFLGFITPTYVYE. The chain crosses the membrane as a helical span at residues 310–333; the sequence is ILIWIVYYNSSMNPLIYAFFYPWF. The Cytoplasmic portion of the chain corresponds to 334 to 358; the sequence is RKATKLIVTGKILRENSSTINLFPE.

It belongs to the G-protein coupled receptor 1 family.

The protein resides in the cell membrane. In terms of biological role, olfactory receptor specific for N,N-dimethylalkylamines trace amines, such as N,N-dimethylcyclohexylamine. Trace amine compounds are enriched in animal body fluids and act on trace amine-associated receptors (TAARs) to elicit both intraspecific and interspecific innate behaviors. Ligand-binding causes a conformation change that triggers signaling via G(s)-class of G alpha proteins (GNAL or GNAS). The chain is Trace amine-associated receptor 7d from Rattus norvegicus (Rat).